A 391-amino-acid polypeptide reads, in one-letter code: MSLNPRDVVIVDFGRTPMGRSKGGMHRNTRAEDMSAHLISKLLERNDKIDPKEVEDVIWGCVNQTMEQGWNIARMASLMTPIPHTSAAQTVSRLCGSSMSALHTAAQAIMTGNGDVFVIGGVEHMGHVSMMHGVDPNPHLSLHAAKASGMMGLTAEMLGKMHGITREQQDLFGVRSHQLAHKATVEGKFKDEIIPMQGYDENGFLKVFDFDETIRPETTLEGLASLKPAFNPKGGTVTAGTSSQITDGASCMIVMSGQRAMDLGIQPLAVIRSMAVAGVDPAIMGYGPVPSTQKALKRAGLTMADIDFIELNEAFAAQALPVLKDLKVLDKMDEKVNLHGGAIALGHPFGCSGARISGTLLNVMKQNGGTLGVATMCVGLGQGITTVFERV.

The active-site Acyl-thioester intermediate is cysteine 95. Active-site proton acceptor residues include histidine 347 and cysteine 377.

Belongs to the thiolase-like superfamily. Thiolase family. In terms of assembly, heterotetramer of two alpha chains (FadB) and two beta chains (FadA).

The protein localises to the cytoplasm. The catalysed reaction is an acyl-CoA + acetyl-CoA = a 3-oxoacyl-CoA + CoA. It participates in lipid metabolism; fatty acid beta-oxidation. Functionally, catalyzes the final step of fatty acid oxidation in which acetyl-CoA is released and the CoA ester of a fatty acid two carbons shorter is formed. In Pseudomonas entomophila (strain L48), this protein is 3-ketoacyl-CoA thiolase.